A 251-amino-acid polypeptide reads, in one-letter code: ATP synthase subunit a (251 aa).

The next 5 helical transmembrane spans lie at 28–48 (TDTV…AFFL), 84–104 (IAPF…ISNW), 130–150 (INYV…AGIW), 192–212 (IFAG…IMWA), and 220–240 (FDLF…ILYF).

Belongs to the ATPase A chain family. As to quaternary structure, F-type ATPases have 2 components, CF(1) - the catalytic core - and CF(0) - the membrane proton channel. CF(1) has five subunits: alpha(3), beta(3), gamma(1), delta(1), epsilon(1). CF(0) has three main subunits: a(1), b(2) and c(9-12). The alpha and beta chains form an alternating ring which encloses part of the gamma chain. CF(1) is attached to CF(0) by a central stalk formed by the gamma and epsilon chains, while a peripheral stalk is formed by the delta and b chains.

The protein resides in the cell membrane. Key component of the proton channel; it plays a direct role in the translocation of protons across the membrane. In Mycobacterium leprae (strain TN), this protein is ATP synthase subunit a.